The sequence spans 318 residues: Lymphatic vessel endothelial hyaluronic acid receptor 1 (318 aa).

An N-terminal signal peptide occupies residues 1-23 (MLQHTSLVLLLASIWTTRHPVQG). The Extracellular portion of the chain corresponds to 24–234 (ADLVQDLSIS…EAAGFGGVPT (211 aa)). Positions 39-129 (GVALVGRNKN…SQKFKAYCHN (91 aa)) constitute a Link domain. Asn-52 carries N-linked (GlcNAc...) asparagine glycosylation. 2 cysteine pairs are disulfide-bonded: Cys-60–Cys-127 and Cys-84–Cys-105. N-linked (GlcNAc...) asparagine glycosylation occurs at Asn-129. The chain crosses the membrane as a helical span at residues 235–255 (ALLVLALLFFGAAAVLAVCYV). At 256 to 318 (KRYVKAFPFT…TTVRCLEAEV (63 aa)) the chain is on the cytoplasmic side. Over residues 284-305 (ADDVNANEESKKTIKNPEEAKS) the composition is skewed to basic and acidic residues. The disordered stretch occupies residues 284 to 318 (ADDVNANEESKKTIKNPEEAKSPPKTTVRCLEAEV).

Homodimer; disulfide-linked. Interacts with PDGFB and IGFBP3. Forms a transient ternary complex with PDGFB and PDGFRB in TGN. In terms of processing, O-glycosylated.

It is found in the membrane. In terms of biological role, ligand-specific transporter trafficking between intracellular organelles (TGN) and the plasma membrane. Plays a role in autocrine regulation of cell growth mediated by growth regulators containing cell surface retention sequence binding (CRS). May act as a hyaluronan (HA) transporter, either mediating its uptake for catabolism within lymphatic endothelial cells themselves, or its transport into the lumen of afferent lymphatic vessels for subsequent re-uptake and degradation in lymph nodes. Binds to pericelluar hyaluronan matrices deposited on the surface of leukocytes and facilitates cell adhesion and migration through lymphatic endothelium. The protein is Lymphatic vessel endothelial hyaluronic acid receptor 1 (Lyve1) of Mus musculus (Mouse).